The following is a 156-amino-acid chain: ATP synthase subunit b (156 aa).

Residues 12–32 (VAFLIFVLFCMKYVWPPVITA) form a helical membrane-spanning segment.

The protein belongs to the ATPase B chain family. F-type ATPases have 2 components, F(1) - the catalytic core - and F(0) - the membrane proton channel. F(1) has five subunits: alpha(3), beta(3), gamma(1), delta(1), epsilon(1). F(0) has three main subunits: a(1), b(2) and c(10-14). The alpha and beta chains form an alternating ring which encloses part of the gamma chain. F(1) is attached to F(0) by a central stalk formed by the gamma and epsilon chains, while a peripheral stalk is formed by the delta and b chains.

It localises to the cell inner membrane. Its function is as follows. F(1)F(0) ATP synthase produces ATP from ADP in the presence of a proton or sodium gradient. F-type ATPases consist of two structural domains, F(1) containing the extramembraneous catalytic core and F(0) containing the membrane proton channel, linked together by a central stalk and a peripheral stalk. During catalysis, ATP synthesis in the catalytic domain of F(1) is coupled via a rotary mechanism of the central stalk subunits to proton translocation. Component of the F(0) channel, it forms part of the peripheral stalk, linking F(1) to F(0). In Pseudomonas putida (strain GB-1), this protein is ATP synthase subunit b.